Here is a 304-residue protein sequence, read N- to C-terminus: N-acetylmuramic acid 6-phosphate etherase (304 aa).

The 164-residue stretch at I62–K225 folds into the SIS domain. E90 acts as the Proton donor in catalysis. E121 is an active-site residue.

Belongs to the GCKR-like family. MurNAc-6-P etherase subfamily. Homodimer.

The catalysed reaction is N-acetyl-D-muramate 6-phosphate + H2O = N-acetyl-D-glucosamine 6-phosphate + (R)-lactate. It functions in the pathway amino-sugar metabolism; 1,6-anhydro-N-acetylmuramate degradation. The protein operates within amino-sugar metabolism; N-acetylmuramate degradation. Its pathway is cell wall biogenesis; peptidoglycan recycling. In terms of biological role, specifically catalyzes the cleavage of the D-lactyl ether substituent of MurNAc 6-phosphate, producing GlcNAc 6-phosphate and D-lactate. Together with AnmK, is also required for the utilization of anhydro-N-acetylmuramic acid (anhMurNAc) either imported from the medium or derived from its own cell wall murein, and thus plays a role in cell wall recycling. This Actinobacillus pleuropneumoniae serotype 7 (strain AP76) protein is N-acetylmuramic acid 6-phosphate etherase.